Here is a 478-residue protein sequence, read N- to C-terminus: Bifunctional protein HldE (478 aa).

Residues 1 to 318 (MKVTLPDFRQ…ENAIRGRADT (318 aa)) form a ribokinase region. Residue 195–198 (NLSE) coordinates ATP. Residue D264 is part of the active site. The cytidylyltransferase stretch occupies residues 344 to 478 (MTNGCFDILH…NMIKASTSQS (135 aa)).

The protein in the N-terminal section; belongs to the carbohydrate kinase PfkB family. This sequence in the C-terminal section; belongs to the cytidylyltransferase family. As to quaternary structure, homodimer.

The catalysed reaction is D-glycero-beta-D-manno-heptose 7-phosphate + ATP = D-glycero-beta-D-manno-heptose 1,7-bisphosphate + ADP + H(+). It catalyses the reaction D-glycero-beta-D-manno-heptose 1-phosphate + ATP + H(+) = ADP-D-glycero-beta-D-manno-heptose + diphosphate. The protein operates within nucleotide-sugar biosynthesis; ADP-L-glycero-beta-D-manno-heptose biosynthesis; ADP-L-glycero-beta-D-manno-heptose from D-glycero-beta-D-manno-heptose 7-phosphate: step 1/4. It participates in nucleotide-sugar biosynthesis; ADP-L-glycero-beta-D-manno-heptose biosynthesis; ADP-L-glycero-beta-D-manno-heptose from D-glycero-beta-D-manno-heptose 7-phosphate: step 3/4. Its function is as follows. Catalyzes the phosphorylation of D-glycero-D-manno-heptose 7-phosphate at the C-1 position to selectively form D-glycero-beta-D-manno-heptose-1,7-bisphosphate. Functionally, catalyzes the ADP transfer from ATP to D-glycero-beta-D-manno-heptose 1-phosphate, yielding ADP-D-glycero-beta-D-manno-heptose. The sequence is that of Bifunctional protein HldE from Pectobacterium atrosepticum (strain SCRI 1043 / ATCC BAA-672) (Erwinia carotovora subsp. atroseptica).